Reading from the N-terminus, the 200-residue chain is Interferon lambda-2 (200 aa).

Positions 1–25 are cleaved as a signal peptide; sequence MKLDMTGDCTPVLVLMAAVLTVTGA.

The protein belongs to the lambda interferon family.

The protein localises to the secreted. In terms of biological role, cytokine with antiviral, antitumour and immunomodulatory activities. Plays a critical role in the antiviral host defense, predominantly in the epithelial tissues. Acts as a ligand for the heterodimeric class II cytokine receptor composed of IL10RB and IFNLR1, and receptor engagement leads to the activation of the JAK/STAT signaling pathway resulting in the expression of IFN-stimulated genes (ISG), which mediate the antiviral state. Has a restricted receptor distribution and therefore restricted targets: is primarily active in epithelial cells and this cell type-selective action is because of the epithelial cell-specific expression of its receptor IFNLR1. Seems not to be essential for early virus-activated host defense in vaginal infection, but plays an important role in Toll-like receptor (TLR)-induced antiviral defense. Plays a significant role in the antiviral immune defense in the intestinal epithelium. Exerts an immunomodulatory effect by up-regulating MHC class I antigen expression. The protein is Interferon lambda-2 (IFNL2) of Homo sapiens (Human).